The primary structure comprises 174 residues: Crossover junction endodeoxyribonuclease RuvC (174 aa).

Catalysis depends on residues aspartate 8, glutamate 67, and aspartate 139. Residues aspartate 8, glutamate 67, and aspartate 139 each coordinate Mg(2+).

It belongs to the RuvC family. Homodimer which binds Holliday junction (HJ) DNA. The HJ becomes 2-fold symmetrical on binding to RuvC with unstacked arms; it has a different conformation from HJ DNA in complex with RuvA. In the full resolvosome a probable DNA-RuvA(4)-RuvB(12)-RuvC(2) complex forms which resolves the HJ. The cofactor is Mg(2+).

Its subcellular location is the cytoplasm. The enzyme catalyses Endonucleolytic cleavage at a junction such as a reciprocal single-stranded crossover between two homologous DNA duplexes (Holliday junction).. The RuvA-RuvB-RuvC complex processes Holliday junction (HJ) DNA during genetic recombination and DNA repair. Endonuclease that resolves HJ intermediates. Cleaves cruciform DNA by making single-stranded nicks across the HJ at symmetrical positions within the homologous arms, yielding a 5'-phosphate and a 3'-hydroxyl group; requires a central core of homology in the junction. The consensus cleavage sequence is 5'-(A/T)TT(C/G)-3'. Cleavage occurs on the 3'-side of the TT dinucleotide at the point of strand exchange. HJ branch migration catalyzed by RuvA-RuvB allows RuvC to scan DNA until it finds its consensus sequence, where it cleaves and resolves the cruciform DNA. The protein is Crossover junction endodeoxyribonuclease RuvC of Ectopseudomonas mendocina (strain ymp) (Pseudomonas mendocina).